A 53-amino-acid chain; its full sequence is Mannose/glucose-specific lectin alpha chain (53 aa).

Belongs to the leguminous lectin family. Heterodimer of an alpha and a beta chain.

In terms of biological role, this lectin specifically binds mannose and glucose. In Vicia cracca (Bird vetch), this protein is Mannose/glucose-specific lectin alpha chain.